We begin with the raw amino-acid sequence, 115 residues long: NADH-ubiquinone oxidoreductase chain 3 (115 aa).

3 helical membrane passes run 4–24 (LVTM…AFWL), 55–75 (FFLV…LLPM), and 86–106 (TMTL…AYEW).

This sequence belongs to the complex I subunit 3 family. As to quaternary structure, core subunit of respiratory chain NADH dehydrogenase (Complex I) which is composed of 45 different subunits. Interacts with TMEM186. Interacts with TMEM242.

It localises to the mitochondrion inner membrane. The enzyme catalyses a ubiquinone + NADH + 5 H(+)(in) = a ubiquinol + NAD(+) + 4 H(+)(out). Its function is as follows. Core subunit of the mitochondrial membrane respiratory chain NADH dehydrogenase (Complex I) which catalyzes electron transfer from NADH through the respiratory chain, using ubiquinone as an electron acceptor. Essential for the catalytic activity of complex I. The polypeptide is NADH-ubiquinone oxidoreductase chain 3 (Nelsonia neotomodon (Diminutive woodrat)).